The chain runs to 137 residues: Ribosome-binding factor A (137 aa).

It belongs to the RbfA family. Monomer. Binds 30S ribosomal subunits, but not 50S ribosomal subunits or 70S ribosomes.

The protein localises to the cytoplasm. In terms of biological role, one of several proteins that assist in the late maturation steps of the functional core of the 30S ribosomal subunit. Associates with free 30S ribosomal subunits (but not with 30S subunits that are part of 70S ribosomes or polysomes). Required for efficient processing of 16S rRNA. May interact with the 5'-terminal helix region of 16S rRNA. This is Ribosome-binding factor A from Nitrobacter winogradskyi (strain ATCC 25391 / DSM 10237 / CIP 104748 / NCIMB 11846 / Nb-255).